Here is a 177-residue protein sequence, read N- to C-terminus: Putative HTH-type transcriptional regulator YvaV (177 aa).

The segment at residues 49-73 (LTELSEATGMSKTRMSQVVREMLDA) is a DNA-binding region (H-T-H motif).

It belongs to the GbsR family.

The protein is Putative HTH-type transcriptional regulator YvaV (yvaV) of Bacillus subtilis (strain 168).